The chain runs to 70 residues: MKVYCLLLVLLVGLVSQAQGQLDKKCQTMCTMEYLPVCGSDGTTYPNKCTLTSTACVNQMDITVLHNGEC.

Residues 1–20 (MKVYCLLLVLLVGLVSQAQG) form the signal peptide. The region spanning 21-70 (QLDKKCQTMCTMEYLPVCGSDGTTYPNKCTLTSTACVNQMDITVLHNGEC) is the Kazal-like domain. 3 disulfides stabilise this stretch: C26-C56, C30-C49, and C38-C70.

This sequence belongs to the conopeptide P-like superfamily. In terms of tissue distribution, expressed by the venom duct.

The protein resides in the secreted. Acts as a neurotoxin by inhibiting an ion channel. May also act as a serine protease inhibitor, since it possess the kazal serine protease inhibitor signature. This chain is Turripeptide Ici9.2, found in Iotyrris cingulifera (Sea snail).